The chain runs to 441 residues: MSLQSPKVGFVSLGCPKASSDSERILTQLRAEGYAISGSYDDADLVVVNTCGFIDSAVEESLDAIGEALAENGKVIVTGCLGAKSDVVKAAHPGVLAVTGPHALEEVMTAVHANLPKLHDPYTDLVPPQGIRLTPQHYAYLKISEGCNHRCSFCIIPSMRGDLVSRSIGDVMTEAENLVNAGVAELLVISQDTSAYGVDVKYRTGFWNGRPVKTRMTELARALGSLGVWVRMHYVYPYPHVDEIIPLMADGLILPYLDVPLQHASPRILKAMKRPASSENNLARINAWREICPDITIRSTFIVGFPGETDEDFECLLEFLQEAQLDRVGCFAYSAVDGAAANALDNPVPEPLKQERLARFMEVQESISAEKQRRKIGRIETVLIDDIDGDQAIGRTAADAPEIDGVVYLSGADGLQPGDLVEAQIVNSDGHDLWAAPPARD.

The region spanning 6-116 (PKVGFVSLGC…VMTAVHANLP (111 aa)) is the MTTase N-terminal domain. The [4Fe-4S] cluster site is built by Cys-15, Cys-51, Cys-80, Cys-147, Cys-151, and Cys-154. A Radical SAM core domain is found at 133-370 (LTPQHYAYLK…MEVQESISAE (238 aa)). A TRAM domain is found at 373 to 439 (RRKIGRIETV…GHDLWAAPPA (67 aa)).

Belongs to the methylthiotransferase family. RimO subfamily. [4Fe-4S] cluster serves as cofactor.

The protein localises to the cytoplasm. It catalyses the reaction L-aspartate(89)-[ribosomal protein uS12]-hydrogen + (sulfur carrier)-SH + AH2 + 2 S-adenosyl-L-methionine = 3-methylsulfanyl-L-aspartate(89)-[ribosomal protein uS12]-hydrogen + (sulfur carrier)-H + 5'-deoxyadenosine + L-methionine + A + S-adenosyl-L-homocysteine + 2 H(+). Functionally, catalyzes the methylthiolation of an aspartic acid residue of ribosomal protein uS12. This Methylobacillus flagellatus (strain ATCC 51484 / DSM 6875 / VKM B-1610 / KT) protein is Ribosomal protein uS12 methylthiotransferase RimO.